Here is a 269-residue protein sequence, read N- to C-terminus: Gene 51 glycoprotein (269 aa).

4 N-linked (GlcNAc...) asparagine; by host glycosylation sites follow: Asn-53, Asn-58, Asn-74, and Asn-78. 2 disordered regions span residues 67–87 (LSTS…TTPY) and 103–137 (MLNS…ASKN). Residues 76–87 (TSNTSYSQTTPY) show a composition bias toward low complexity. The segment covering 103–112 (MLNSTPNKPL) has biased composition (polar residues). Residues 113-136 (SSTKLTPKSQSSSQSTKTTKQASK) are compositionally biased toward low complexity. Residues Asn-137, Asn-161, Asn-170, and Asn-191 are each glycosylated (N-linked (GlcNAc...) asparagine; by host).

This Saimiriine herpesvirus 2 (strain 11) (SaHV-2) protein is Gene 51 glycoprotein (51).